We begin with the raw amino-acid sequence, 1419 residues long: MSQTAPSDTEYNQRLERWSERLKSQTISHLPTDYSRPVPSRLVEAVFERTLPEDAKTALIKVYVAAQAKGILVTPFNILLTIFIILVSRMTGDEDISIGTSSENAIPFVLRTFIQPSDSFLDLLAKVCDLEKEGSSDAVDFSDLINFLNAKLSKKDDPRKTLVHLRFYNAPDAPSENFLSTTGLDVDLTVLVSVKKPSDQLTSLRSQFTFPDLQLKLIYNQLLFSESRVNIVADQLLKLVVSASKDVTGPIGALDLMTPTQMNVLPDPTVDLDWSGYRGAIQDIFASNAAKFPDRECIVVTPSVTIDAPVTSYTYRQIDESSNILAHHLVKNGIERGDVVMVYAYRGVDLVVAVMGVLKAGATFSVIDPAYPPARQIIYLSVAKPRALVVLEDAGVLSPTVVEYVEKSLELKTYVPALKLAKDGSLTGGSVSKGADDILQHVLHLKSEQTGVVVGPDSTPTLSFTSGSEGIPKGVKGRHFSLAYYFDWMAQEFNLSESDRFTMLSGIAHDPIQRDIFTPLFLGASLIVPTAEDIGTPGQLAQWANKYKVTVTHLTPAMGQLLAAQADEPIPSLHHAFFVGDILTKRDCLRLQVLANNVNVVNMYGTTETQRSVSYFVVPARSQDQTFLESQKDVIPAGRGMKNVQLLVINRFDTNKICGIGEVGEIYLRAGGLAEGYLGNDELTSKKFLKSWFADPSKFVDRTPENAPWKPYWFGIRDRMYRSGDLGRYLPTGNVECSGRADDQIKIRGFRIELGEINTHLSRHPNVRENITLVRRDKDEEPTLVAYIVPQGLNKDDFDSATESEDIVVNGLKKYRKLIHDIREYLKTKLPSYAIPSVIVPLHKMPLNPNGKIDKPALPFPDTSQLAAASRSHSKHGVDETLTATERDIRDIWLRIIPHATDVNKKASFFDIGGHSILATRLIFELRKKFAVNVPLGLVFSEPTIEGLAKEIERMKSGEMISVMDIGKEETREPEIEYGKDALDLVDLIPKEFPTSKDLGIDEPKTVFLTGANGYLGVFILRDLMTRSSNLKVIALVRASSEEHGLKRLKDSCTAYGVWDESWAQKISVVNGDLALENWGIEERKWNKLTEVVDYVIHNGALVHWVYPYSKLRGPNVMGTITALKLCSLGKGKSLSFVSSTSTVDTEYYVNLSNEITSKGGNGIPESDPLQGSSKDLHTGYGQSKWVSEYLVRQAGLRGLRGVVVRPGYILGDSKSGAINTDDFLVRMVKGCIELGLYPNINNTVNMVPADHVARVVTASAFHPEQGVIVAHVTSHPRLRFNQFLGTLSTFGFNTKLSEYVNWRIALERFVINESHDSALYPLLHFVLDNLPANTKAPELDDTNTREILKRDASWTNVDVSNGAAILEHEMGLYLSYLVAIGFLPKPTLEGKKLPEVKINEATLEKLASAGGRGGAPTH.

The Carrier domain occupies 880-956 (ETLTATERDI…GLAKEIERMK (77 aa)). Ser916 is modified (O-(pantetheine 4'-phosphoryl)serine).

Belongs to the ATP-dependent AMP-binding enzyme family. It depends on pantetheine 4'-phosphate as a cofactor.

The protein resides in the cytoplasm. It carries out the reaction (S)-2-amino-6-oxohexanoate + NADP(+) + H2O = L-2-aminoadipate + NADPH + 2 H(+). The enzyme catalyses (S)-2-amino-6-oxohexanoate + NAD(+) + H2O = L-2-aminoadipate + NADH + 2 H(+). The catalysed reaction is (S)-2-amino-6-oxohexanoate + AMP + diphosphate + NADP(+) = L-2-aminoadipate + ATP + NADPH + H(+). It participates in amino-acid biosynthesis; L-lysine biosynthesis via AAA pathway; L-lysine from L-alpha-aminoadipate (fungal route): step 1/3. In terms of biological role, catalyzes the activation of alpha-aminoadipate by ATP-dependent adenylation and the reduction of activated alpha-aminoadipate by NADPH. The activated alpha-aminoadipate is bound to the phosphopantheinyl group of the enzyme itself before it is reduced to (S)-2-amino-6-oxohexanoate. This chain is L-2-aminoadipate reductase (lys1), found in Schizosaccharomyces pombe (strain 972 / ATCC 24843) (Fission yeast).